The primary structure comprises 286 residues: Polyamine aminopropyltransferase (286 aa).

The region spanning 9–242 (NGWIDEHHQG…GWWSWTFAAI (234 aa)) is the PABS domain. S-methyl-5'-thioadenosine is bound at residue Q36. The spermidine site is built by H67 and D91. S-methyl-5'-thioadenosine-binding positions include E111 and 143–144 (NG). The Proton acceptor role is filled by D162. S-methyl-5'-thioadenosine is bound at residue P169.

It belongs to the spermidine/spermine synthase family. As to quaternary structure, homodimer or homotetramer.

It is found in the cytoplasm. The enzyme catalyses S-adenosyl 3-(methylsulfanyl)propylamine + putrescine = S-methyl-5'-thioadenosine + spermidine + H(+). Its pathway is amine and polyamine biosynthesis; spermidine biosynthesis; spermidine from putrescine: step 1/1. Functionally, catalyzes the irreversible transfer of a propylamine group from the amino donor S-adenosylmethioninamine (decarboxy-AdoMet) to putrescine (1,4-diaminobutane) to yield spermidine. The sequence is that of Polyamine aminopropyltransferase from Prochlorococcus marinus (strain MIT 9313).